The sequence spans 282 residues: Structure-specific endonuclease subunit slx1 (282 aa).

One can recognise a GIY-YIG domain in the interval 7–97; that stretch reads GFYGVYLLFC…RLTHVPRKTK (91 aa). The SLX1-type zinc-finger motif lies at 191–243; sequence CRVCYERVQDKDDSLHCFHPGCTLTAHIMCLAKLFLLNEPQNLIPVEGLCPSC.

This sequence belongs to the SLX1 family. In terms of assembly, forms a heterodimer with slx4. A divalent metal cation serves as cofactor.

The protein localises to the nucleus. Its function is as follows. Catalytic subunit of the slx1-slx4 structure-specific endonuclease that resolves DNA secondary structures generated during DNA repair and recombination. Has endonuclease activity towards branched DNA substrates, introducing single-strand cuts in duplex DNA close to junctions with ss-DNA. The polypeptide is Structure-specific endonuclease subunit slx1 (slx1a) (Xenopus laevis (African clawed frog)).